The sequence spans 167 residues: Respiratory supercomplex factor 1-A, mitochondrial (167 aa).

One can recognise an HIG1 domain in the interval 1 to 86 (MCSDFEEETS…TERKQRREFE (86 aa)). 2 helical membrane passes run 21-38 (EPLI…LYRA) and 53-75 (MFRA…GMYY). A coiled-coil region spans residues 75–107 (YKTERKQRREFEKKVEERKAQEKRDAWLRELEA).

It belongs to the RCF1 family. Associates with the respiratory chain complex III/complex IV supercomplex.

It localises to the mitochondrion membrane. Functionally, cytochrome c oxidase subunit which plays a role in assembly of respiratory supercomplexes. The chain is Respiratory supercomplex factor 1-A, mitochondrial (rcf1-A) from Talaromyces marneffei (strain ATCC 18224 / CBS 334.59 / QM 7333) (Penicillium marneffei).